Reading from the N-terminus, the 154-residue chain is UPF0225 protein YPTB2098 (154 aa).

The protein belongs to the UPF0225 family.

This Yersinia pseudotuberculosis serotype I (strain IP32953) protein is UPF0225 protein YPTB2098.